The following is a 557-amino-acid chain: Glypican-4 (557 aa).

The signal sequence occupies residues 1–18; sequence MARLGLLALLCTLAALSA. Phosphoserine is present on S357. S494, S498, and S500 each carry an O-linked (Xyl...) (glycosaminoglycan) serine glycan. A glycan (N-linked (GlcNAc...) asparagine) is linked at N514. A lipid anchor (GPI-anchor amidated serine) is attached at S529. A propeptide spans 530 to 557 (removed in mature form); that stretch reads AGGAHAEAKPYLLAALCILFLAVQGEWR.

This sequence belongs to the glypican family. As to expression, highly expressed in developing brain and kidney.

It localises to the cell membrane. The protein localises to the secreted. It is found in the extracellular space. In terms of biological role, cell surface proteoglycan that bears heparan sulfate. May be involved in the development of kidney tubules and of the central nervous system. In Mus musculus (Mouse), this protein is Glypican-4 (Gpc4).